A 423-amino-acid chain; its full sequence is Mannose-6-phosphate isomerase (423 aa).

An N-acetylalanine modification is found at Ala2. Phosphoserine is present on residues Ser102 and Ser108. Zn(2+) contacts are provided by Gln110, His112, Glu137, and His276. Arg295 is an active-site residue.

This sequence belongs to the mannose-6-phosphate isomerase type 1 family. Zn(2+) is required as a cofactor.

It localises to the cytoplasm. It carries out the reaction D-mannose 6-phosphate = D-fructose 6-phosphate. It functions in the pathway nucleotide-sugar biosynthesis; GDP-alpha-D-mannose biosynthesis; alpha-D-mannose 1-phosphate from D-fructose 6-phosphate: step 1/2. In terms of biological role, isomerase that catalyzes the interconversion of fructose-6-P and mannose-6-P and has a critical role in the supply of D-mannose derivatives required for many eukaryotic glycosylation reactions. The protein is Mannose-6-phosphate isomerase of Rattus norvegicus (Rat).